Consider the following 547-residue polypeptide: Glucose-6-phosphate isomerase (547 aa).

Glu350 (proton donor) is an active-site residue. Residues His381 and Lys510 contribute to the active site.

The protein belongs to the GPI family.

The protein localises to the cytoplasm. The catalysed reaction is alpha-D-glucose 6-phosphate = beta-D-fructose 6-phosphate. The protein operates within carbohydrate biosynthesis; gluconeogenesis. It participates in carbohydrate degradation; glycolysis; D-glyceraldehyde 3-phosphate and glycerone phosphate from D-glucose: step 2/4. In terms of biological role, catalyzes the reversible isomerization of glucose-6-phosphate to fructose-6-phosphate. This is Glucose-6-phosphate isomerase from Mesorhizobium japonicum (strain LMG 29417 / CECT 9101 / MAFF 303099) (Mesorhizobium loti (strain MAFF 303099)).